Here is a 239-residue protein sequence, read N- to C-terminus: tRNA1(Val) (adenine(37)-N6)-methyltransferase (239 aa).

This sequence belongs to the methyltransferase superfamily. tRNA (adenine-N(6)-)-methyltransferase family.

Its subcellular location is the cytoplasm. The catalysed reaction is adenosine(37) in tRNA1(Val) + S-adenosyl-L-methionine = N(6)-methyladenosine(37) in tRNA1(Val) + S-adenosyl-L-homocysteine + H(+). Specifically methylates the adenine in position 37 of tRNA(1)(Val) (anticodon cmo5UAC). The chain is tRNA1(Val) (adenine(37)-N6)-methyltransferase from Trichodesmium erythraeum (strain IMS101).